A 289-amino-acid chain; its full sequence is ATP synthase gamma chain (289 aa).

This sequence belongs to the ATPase gamma chain family. As to quaternary structure, F-type ATPases have 2 components, CF(1) - the catalytic core - and CF(0) - the membrane proton channel. CF(1) has five subunits: alpha(3), beta(3), gamma(1), delta(1), epsilon(1). CF(0) has three main subunits: a, b and c.

It is found in the cell inner membrane. Produces ATP from ADP in the presence of a proton gradient across the membrane. The gamma chain is believed to be important in regulating ATPase activity and the flow of protons through the CF(0) complex. The protein is ATP synthase gamma chain of Polynucleobacter necessarius subsp. necessarius (strain STIR1).